The chain runs to 618 residues: Protein fem-1 homolog C (618 aa).

ANK repeat units lie at residues 2 to 31 (DLKT…DREV), 40 to 70 (NGAT…PVEL), 82 to 111 (EGAP…SVNN), 115 to 144 (TNST…DLEV), 148 to 177 (HGHT…DVNR), 181 to 210 (KGNT…SMEK), and 213 to 243 (YGMT…GLAE). 2 TPR repeats span residues 245 to 279 (ISAL…RHSE) and 337 to 370 (SYYI…QQSN). ANK repeat units follow at residues 482 to 524 (NGFS…DVNS) and 528 to 557 (DDNS…HFDS).

The protein belongs to the fem-1 family. Component of a CRL2 E3 ubiquitin-protein ligase complex, also named ECS (Elongin BC-CUL2/5-SOCS-box protein) complex.

It functions in the pathway protein modification; protein ubiquitination. Substrate-recognition component of a Cul2-RING (CRL2) E3 ubiquitin-protein ligase complex of the DesCEND (destruction via C-end degrons) pathway, which recognizes a C-degron located at the extreme C terminus of target proteins, leading to their ubiquitination and degradation. The C-degron recognized by the DesCEND pathway is usually a motif of less than ten residues and can be present in full-length proteins, truncated proteins or proteolytically cleaved forms. The CRL2(FEM1C) complex specifically recognizes proteins with an arginine at the C-terminus: recognizes and binds proteins ending with -Lys/Arg-Xaa-Arg and -Lys/Arg-Xaa-Xaa-Arg C-degrons, leading to their ubiquitination and degradation. The chain is Protein fem-1 homolog C from Danio rerio (Zebrafish).